We begin with the raw amino-acid sequence, 501 residues long: UDP-N-acetylmuramoyl-L-alanyl-D-glutamate--2,6-diaminopimelate ligase (501 aa).

A UDP-N-acetyl-alpha-D-muramoyl-L-alanyl-D-glutamate-binding site is contributed by serine 29. Residue 112 to 118 (GTNGKTS) coordinates ATP. Residues 161-162 (TT), serine 188, and arginine 196 each bind UDP-N-acetyl-alpha-D-muramoyl-L-alanyl-D-glutamate. Lysine 228 carries the N6-carboxylysine modification. Residues arginine 393, 417–420 (DNPR), glycine 468, and glutamate 472 contribute to the meso-2,6-diaminopimelate site. Positions 417-420 (DNPR) match the Meso-diaminopimelate recognition motif motif.

The protein belongs to the MurCDEF family. MurE subfamily. It depends on Mg(2+) as a cofactor. Post-translationally, carboxylation is probably crucial for Mg(2+) binding and, consequently, for the gamma-phosphate positioning of ATP.

It localises to the cytoplasm. The catalysed reaction is UDP-N-acetyl-alpha-D-muramoyl-L-alanyl-D-glutamate + meso-2,6-diaminopimelate + ATP = UDP-N-acetyl-alpha-D-muramoyl-L-alanyl-gamma-D-glutamyl-meso-2,6-diaminopimelate + ADP + phosphate + H(+). The protein operates within cell wall biogenesis; peptidoglycan biosynthesis. Functionally, catalyzes the addition of meso-diaminopimelic acid to the nucleotide precursor UDP-N-acetylmuramoyl-L-alanyl-D-glutamate (UMAG) in the biosynthesis of bacterial cell-wall peptidoglycan. The protein is UDP-N-acetylmuramoyl-L-alanyl-D-glutamate--2,6-diaminopimelate ligase of Acidovorax sp. (strain JS42).